Here is a 418-residue protein sequence, read N- to C-terminus: MNKSVAPLLLAASILYGGAAAQQTVWGQCGGIGWSGPTNCAPGSACSTLNPYYAQCIPGATTITTSTRPPSGPTTTTRATSTSSSTPPTSSGVRFAGVNIAGFDFGCTTDGTCVTSKVYPPLKNFTGSNNYPDGIGQMQHFVNDDGMTIFRLPVGWQYLVNNNLGGNLDSTSISKYDQLVQGCLSLGAYCIVDIHNYARWNGGIIGQGGPTNAQFTSLWSQLASKYASQSRVWFGIMNEPHDVNINTWAATVQEVVTAIRNAGATSQFISLPGNDWQSAGAFISDGSAAALSQVTNPDGSTTNLIFDVHKYLDSDNSGTHAECTTNNIDGAFSPLATWLRQNNRQAILTETGGGNVQSCIQDMCQQIQYLNQNSDVYLGYVGWGAGSFDSTYVLTETPTGSGNSWTDTSLVSSCLARK.

Residues 1–21 (MNKSVAPLLLAASILYGGAAA) form the signal peptide. Pyrrolidone carboxylic acid is present on Gln22. A CBM1 domain is found at 22-57 (QQTVWGQCGGIGWSGPTNCAPGSACSTLNPYYAQCI). The segment at 58–91 (PGATTITTSTRPPSGPTTTTRATSTSSSTPPTSS) is linker. Positions 63-91 (ITTSTRPPSGPTTTTRATSTSSSTPPTSS) are disordered. The catalytic stretch occupies residues 92–418 (GVRFAGVNIA…SLVSSCLARK (327 aa)). A disulfide bridge connects residues Cys107 and Cys113. An N-linked (GlcNAc) asparagine glycan is attached at Asn124. Cys183 and Cys190 are oxidised to a cystine. Glu239 functions as the Proton donor/acceptor in the catalytic mechanism. Disulfide bonds link Cys323-Cys359 and Cys364-Cys414. Residue Glu350 is the Nucleophile of the active site.

This sequence belongs to the glycosyl hydrolase 5 (cellulase A) family.

It localises to the secreted. The catalysed reaction is Endohydrolysis of (1-&gt;4)-beta-D-glucosidic linkages in cellulose, lichenin and cereal beta-D-glucans.. Its function is as follows. Endoglucanase (EG) that cleaves the internal beta-1,4-glucosidic bonds in cellulose. The degradation of cellulose involves an interplay between different cellulolytic enzymes. Hydrolysis starts with EGs, which cut internal glycosidic linkages to reduce the polymerization degree of the substrate and creates new chain ends for exocellobiohydrolases (CBHs). The CBH release the disaccharide cellobiose from the non-reducing end of the cellulose polymer chain. Finally, beta-1,4-glucosidases hydrolyze the cellobiose and other short cello-oligosaccharides into glucose units. This chain is Endoglucanase EG-II (egl2), found in Hypocrea jecorina (strain ATCC 56765 / BCRC 32924 / NRRL 11460 / Rut C-30) (Trichoderma reesei).